The chain runs to 403 residues: Aloesone synthase (403 aa).

C174 is a catalytic residue. CoA-binding positions include S281 and 318–321 (GGRA).

The protein belongs to the thiolase-like superfamily. Chalcone/stilbene synthases family. Homodimer.

It participates in secondary metabolite biosynthesis; flavonoid biosynthesis. Functionally, catalyzes the iterative condensations of 6, 7 or 8 molecules of malonyl-CoA to produce various aromatic polyketides. Produces the heptaketide aloesone, the aglycone of aloesin, from 7 molecules of malonyl-CoA as a major product. Also able to produce a hexaketide pyrone, a heptaketide 6-(2-acetyl-3,5-dihydroxybenzyl)-4-hydroxy-2-pyrone, a novel heptaketide 6-(2-(2,4-dihydroxy-6-methylphenyl)-2-oxoethyl)-4-hydroxy-2-pyrone and octaketides SEK4/SEK4b. In Aloe arborescens (Kidachi aloe), this protein is Aloesone synthase (PKS3).